Consider the following 510-residue polypeptide: GMP synthase [glutamine-hydrolyzing] (510 aa).

The Glutamine amidotransferase type-1 domain occupies 5 to 195 (LVLVVDFGGQ…LFNVCNLKGD (191 aa)). C82 (nucleophile) is an active-site residue. Active-site residues include H169 and E171. Residues 196–385 (WSMSSFAEQQ…LGIPHKLVWR (190 aa)) enclose the GMPS ATP-PPase domain. 223 to 229 (SGGVDSS) contributes to the ATP binding site.

As to quaternary structure, homodimer.

It catalyses the reaction XMP + L-glutamine + ATP + H2O = GMP + L-glutamate + AMP + diphosphate + 2 H(+). Its pathway is purine metabolism; GMP biosynthesis; GMP from XMP (L-Gln route): step 1/1. Its function is as follows. Catalyzes the synthesis of GMP from XMP. This Clostridium botulinum (strain Kyoto / Type A2) protein is GMP synthase [glutamine-hydrolyzing].